The sequence spans 202 residues: Potassium-transporting ATPase KdpC subunit 1 (202 aa).

The helical transmembrane segment at 17–37 threads the bilayer; it reads LWVIAAVIYPFFMIAVGQIVF.

Belongs to the KdpC family. In terms of assembly, the system is composed of three essential subunits: KdpA, KdpB and KdpC.

It is found in the cell inner membrane. Its function is as follows. Part of the high-affinity ATP-driven potassium transport (or Kdp) system, which catalyzes the hydrolysis of ATP coupled with the electrogenic transport of potassium into the cytoplasm. This subunit acts as a catalytic chaperone that increases the ATP-binding affinity of the ATP-hydrolyzing subunit KdpB by the formation of a transient KdpB/KdpC/ATP ternary complex. The sequence is that of Potassium-transporting ATPase KdpC subunit 1 from Nostoc sp. (strain PCC 7120 / SAG 25.82 / UTEX 2576).